The following is a 448-amino-acid chain: N-succinylarginine dihydrolase (448 aa).

Residues 19 to 28 (GGLSYGNVAS), Asn110, and 137 to 138 (HR) contribute to the substrate site. The active site involves Glu174. Arg214 is a substrate binding site. His250 is a catalytic residue. Residues Asp252 and Asn365 each coordinate substrate. Residue Cys371 is the Nucleophile of the active site.

The protein belongs to the succinylarginine dihydrolase family. Homodimer.

It carries out the reaction N(2)-succinyl-L-arginine + 2 H2O + 2 H(+) = N(2)-succinyl-L-ornithine + 2 NH4(+) + CO2. Its pathway is amino-acid degradation; L-arginine degradation via AST pathway; L-glutamate and succinate from L-arginine: step 2/5. Functionally, catalyzes the hydrolysis of N(2)-succinylarginine into N(2)-succinylornithine, ammonia and CO(2). The protein is N-succinylarginine dihydrolase of Pseudomonas syringae pv. syringae (strain B728a).